Consider the following 365-residue polypeptide: S-adenosylmethionine:tRNA ribosyltransferase-isomerase (365 aa).

It belongs to the QueA family. Monomer.

The protein localises to the cytoplasm. The catalysed reaction is 7-aminomethyl-7-carbaguanosine(34) in tRNA + S-adenosyl-L-methionine = epoxyqueuosine(34) in tRNA + adenine + L-methionine + 2 H(+). The protein operates within tRNA modification; tRNA-queuosine biosynthesis. In terms of biological role, transfers and isomerizes the ribose moiety from AdoMet to the 7-aminomethyl group of 7-deazaguanine (preQ1-tRNA) to give epoxyqueuosine (oQ-tRNA). The protein is S-adenosylmethionine:tRNA ribosyltransferase-isomerase of Helicobacter hepaticus (strain ATCC 51449 / 3B1).